Here is a 428-residue protein sequence, read N- to C-terminus: Adenylosuccinate synthetase (428 aa).

GTP-binding positions include 12–18 and 40–42; these read GDEGKGK and GHT. Catalysis depends on Asp13, which acts as the Proton acceptor. The Mg(2+) site is built by Asp13 and Gly40. IMP contacts are provided by residues 13–16, 38–41, Thr128, Arg142, Gln222, Thr237, and Arg301; these read DEGK and NAGH. Catalysis depends on His41, which acts as the Proton donor. 297 to 303 is a substrate binding site; sequence TVTGRSR. GTP is bound by residues Arg303, 329–331, and 411–413; these read KLD and STS.

This sequence belongs to the adenylosuccinate synthetase family. Homodimer. It depends on Mg(2+) as a cofactor.

The protein resides in the cytoplasm. The enzyme catalyses IMP + L-aspartate + GTP = N(6)-(1,2-dicarboxyethyl)-AMP + GDP + phosphate + 2 H(+). Its pathway is purine metabolism; AMP biosynthesis via de novo pathway; AMP from IMP: step 1/2. Functionally, plays an important role in the de novo pathway of purine nucleotide biosynthesis. Catalyzes the first committed step in the biosynthesis of AMP from IMP. The sequence is that of Adenylosuccinate synthetase from Phenylobacterium zucineum (strain HLK1).